Consider the following 616-residue polypeptide: Chaperone protein HscA (616 aa).

The protein belongs to the heat shock protein 70 family.

Functionally, chaperone involved in the maturation of iron-sulfur cluster-containing proteins. Has a low intrinsic ATPase activity which is markedly stimulated by HscB. Involved in the maturation of IscU. This is Chaperone protein HscA from Salmonella paratyphi C (strain RKS4594).